The primary structure comprises 511 residues: UDP-N-acetylmuramate--L-alanine ligase (511 aa).

Position 127-133 (127-133 (GTHGKTT)) interacts with ATP. A disordered region spans residues 481 to 511 (VGTVPGGEVGGATTIGGTVPGGSAPGASAAG). Residues 484–504 (VPGGEVGGATTIGGTVPGGSA) are compositionally biased toward gly residues.

The protein belongs to the MurCDEF family.

The protein localises to the cytoplasm. It catalyses the reaction UDP-N-acetyl-alpha-D-muramate + L-alanine + ATP = UDP-N-acetyl-alpha-D-muramoyl-L-alanine + ADP + phosphate + H(+). Its pathway is cell wall biogenesis; peptidoglycan biosynthesis. Cell wall formation. This is UDP-N-acetylmuramate--L-alanine ligase from Salinispora arenicola (strain CNS-205).